The chain runs to 162 residues: Allophycocyanin alpha-B chain (162 aa).

The residue at position 71 (asparagine 71) is an N4-methylasparagine. Position 81 (cysteine 81) interacts with (2R,3E)-phycocyanobilin.

This sequence belongs to the phycobiliprotein family. In terms of processing, contains one covalently linked phycocyanobilin chromophore.

It is found in the plastid. It localises to the cyanelle thylakoid membrane. Allophycocyanin is a photosynthetic bile pigment-protein complex with maximum absorption at approximately 650 nanometers. This Cyanophora paradoxa protein is Allophycocyanin alpha-B chain (apcD).